The sequence spans 39 residues: Photosystem II reaction center protein L (39 aa).

Residues 18 to 38 (SLYLGLLLIAVLGILFSSYFF) traverse the membrane as a helical segment.

It belongs to the PsbL family. As to quaternary structure, PSII is composed of 1 copy each of membrane proteins PsbA, PsbB, PsbC, PsbD, PsbE, PsbF, PsbH, PsbI, PsbJ, PsbK, PsbL, PsbM, PsbT, PsbX, PsbY, PsbZ, Psb30/Ycf12, peripheral proteins PsbO, CyanoQ (PsbQ), PsbU, PsbV and a large number of cofactors. It forms dimeric complexes.

It is found in the cellular thylakoid membrane. In terms of biological role, one of the components of the core complex of photosystem II (PSII). PSII is a light-driven water:plastoquinone oxidoreductase that uses light energy to abstract electrons from H(2)O, generating O(2) and a proton gradient subsequently used for ATP formation. It consists of a core antenna complex that captures photons, and an electron transfer chain that converts photonic excitation into a charge separation. This subunit is found at the monomer-monomer interface and is required for correct PSII assembly and/or dimerization. The chain is Photosystem II reaction center protein L from Picosynechococcus sp. (strain ATCC 27264 / PCC 7002 / PR-6) (Agmenellum quadruplicatum).